The sequence spans 177 residues: MIKSTGALLLFAALSAGQAMASDVAFRGNLLDRPCHVSGDSLNKHVVFKTRASRDFWYPPGRSPTESFVIRLENCHATAVGKIVTLTFKGTEEALPGHLKVTGVNSGRLAIALLDTDGSSLLKPGASHNKGQGEKVTGNSLELPFGAYVVATPEALRTKSVVPGDYEATATFELTYR.

The N-terminal stretch at 1–21 is a signal peptide; it reads MIKSTGALLLFAALSAGQAMA.

The protein resides in the fimbrium. In Escherichia coli, this protein is Protein PrsK (prsK).